Consider the following 466-residue polypeptide: Bifunctional protein GlmU (466 aa).

The interval 1 to 236 (MEVMPQPLTI…PAEALGINDR (236 aa)) is pyrophosphorylase. UDP-N-acetyl-alpha-D-glucosamine-binding positions include 13–16 (LAAG), lysine 27, glutamine 79, 84–85 (GT), 107–109 (YGD), glycine 146, glutamate 161, asparagine 176, and asparagine 234. Aspartate 109 contributes to the Mg(2+) binding site. Asparagine 234 lines the Mg(2+) pocket. A linker region spans residues 237-257 (AQLAEVDRIFRDRKRRAVMAA). Residues 258-466 (GVTLIQPETI…AKKRRKLAKT (209 aa)) are N-acetyltransferase. Positions 340 and 358 each coordinate UDP-N-acetyl-alpha-D-glucosamine. Catalysis depends on histidine 370, which acts as the Proton acceptor. UDP-N-acetyl-alpha-D-glucosamine contacts are provided by tyrosine 373 and asparagine 384. Acetyl-CoA is bound by residues alanine 387, 393–394 (NY), serine 412, alanine 430, and arginine 447.

It in the N-terminal section; belongs to the N-acetylglucosamine-1-phosphate uridyltransferase family. In the C-terminal section; belongs to the transferase hexapeptide repeat family. Homotrimer. The cofactor is Mg(2+).

Its subcellular location is the cytoplasm. It carries out the reaction alpha-D-glucosamine 1-phosphate + acetyl-CoA = N-acetyl-alpha-D-glucosamine 1-phosphate + CoA + H(+). It catalyses the reaction N-acetyl-alpha-D-glucosamine 1-phosphate + UTP + H(+) = UDP-N-acetyl-alpha-D-glucosamine + diphosphate. It functions in the pathway nucleotide-sugar biosynthesis; UDP-N-acetyl-alpha-D-glucosamine biosynthesis; N-acetyl-alpha-D-glucosamine 1-phosphate from alpha-D-glucosamine 6-phosphate (route II): step 2/2. Its pathway is nucleotide-sugar biosynthesis; UDP-N-acetyl-alpha-D-glucosamine biosynthesis; UDP-N-acetyl-alpha-D-glucosamine from N-acetyl-alpha-D-glucosamine 1-phosphate: step 1/1. It participates in bacterial outer membrane biogenesis; LPS lipid A biosynthesis. Catalyzes the last two sequential reactions in the de novo biosynthetic pathway for UDP-N-acetylglucosamine (UDP-GlcNAc). The C-terminal domain catalyzes the transfer of acetyl group from acetyl coenzyme A to glucosamine-1-phosphate (GlcN-1-P) to produce N-acetylglucosamine-1-phosphate (GlcNAc-1-P), which is converted into UDP-GlcNAc by the transfer of uridine 5-monophosphate (from uridine 5-triphosphate), a reaction catalyzed by the N-terminal domain. This is Bifunctional protein GlmU from Solibacter usitatus (strain Ellin6076).